Reading from the N-terminus, the 60-residue chain is Large ribosomal subunit protein uL30 (60 aa).

This sequence belongs to the universal ribosomal protein uL30 family. As to quaternary structure, part of the 50S ribosomal subunit.

The protein is Large ribosomal subunit protein uL30 of Leuconostoc mesenteroides subsp. mesenteroides (strain ATCC 8293 / DSM 20343 / BCRC 11652 / CCM 1803 / JCM 6124 / NCDO 523 / NBRC 100496 / NCIMB 8023 / NCTC 12954 / NRRL B-1118 / 37Y).